We begin with the raw amino-acid sequence, 382 residues long: D-galactonate dehydratase (382 aa).

A Mg(2+)-binding site is contributed by aspartate 183. Histidine 185 (proton donor) is an active-site residue. 2 residues coordinate Mg(2+): glutamate 209 and glutamate 235. Histidine 285 (proton acceptor) is an active-site residue. Positions asparagine 361–tryptophan 382 are disordered.

It belongs to the mandelate racemase/muconate lactonizing enzyme family. GalD subfamily. It depends on Mg(2+) as a cofactor.

It catalyses the reaction D-galactonate = 2-dehydro-3-deoxy-D-galactonate + H2O. It participates in carbohydrate acid metabolism; D-galactonate degradation; D-glyceraldehyde 3-phosphate and pyruvate from D-galactonate: step 1/3. Functionally, catalyzes the dehydration of D-galactonate to 2-keto-3-deoxy-D-galactonate. The chain is D-galactonate dehydratase from Xanthomonas oryzae pv. oryzae (strain MAFF 311018).